Consider the following 556-residue polypeptide: (S)-N-methylcanadine 1-hydroxylase CYP82Y1 (556 aa).

A helical membrane pass occupies residues 18–38; sequence TAVGTLILAFLLTLSPVIIYY. Cysteine 500 contributes to the heme binding site.

Belongs to the cytochrome P450 family. Requires heme as cofactor. As to expression, highly expressed in capsules. Expressed is stems.

It localises to the membrane. The catalysed reaction is (S)-cis-N-methylcanadine + reduced [NADPH--hemoprotein reductase] + O2 = (S)-1-hydroxy-N-methylcanadine + oxidized [NADPH--hemoprotein reductase] + H2O + H(+). It participates in alkaloid biosynthesis. Cytochrome P450 involved in the biosynthesis of the benzylisoquinoline alkaloid noscapine. Converts (S)-N-methylcanadine to (S)-1-hydroxy-N-methylcanadine. This Papaver somniferum (Opium poppy) protein is (S)-N-methylcanadine 1-hydroxylase CYP82Y1.